We begin with the raw amino-acid sequence, 425 residues long: Trigger factor (425 aa).

Residues 163–248 form the PPIase FKBP-type domain; sequence GDTAVIDFEG…IHEIKTKELP (86 aa).

Belongs to the FKBP-type PPIase family. Tig subfamily.

It localises to the cytoplasm. It catalyses the reaction [protein]-peptidylproline (omega=180) = [protein]-peptidylproline (omega=0). Functionally, involved in protein export. Acts as a chaperone by maintaining the newly synthesized protein in an open conformation. Functions as a peptidyl-prolyl cis-trans isomerase. The protein is Trigger factor of Bacillus cereus (strain G9842).